Reading from the N-terminus, the 706-residue chain is G2/M phase-specific E3 ubiquitin-protein ligase (706 aa).

Residues 11–51 (NLACVFCRKHDDCPNKYGEKKTKEKWNLTVHYYCLLMSSGI) form a C2HC pre-PHD-type zinc finger. The PHD-type 1 zinc finger occupies 79–128 (LKCCVCKKNGASIGCVAPRCKRSYHFPCGLQRECIFQFTGNFASFCWDHR). Residues 143–193 (PCTICLEFIEPIPSYNILRSPCCKNAWFHRDCLQVQAINAGVFFFRCTICN) form a PHD-type 2; degenerate zinc finger. The PHD-type 3 zinc-finger motif lies at 237–286 (RCRCKEGRDYNAPDSKWEIKRCQCCGSSGTHLACSSLRSWEQNWECLECR). The HECT domain occupies 371 to 698 (IWNSALDAFR…IRNTLRLEKE (328 aa)).

Predominantly expressed in brain, liver, kidney, testes and ovary.

Its subcellular location is the nucleus. The protein localises to the nucleolus. It is found in the cytoplasm. The catalysed reaction is S-ubiquitinyl-[E2 ubiquitin-conjugating enzyme]-L-cysteine + [acceptor protein]-L-lysine = [E2 ubiquitin-conjugating enzyme]-L-cysteine + N(6)-ubiquitinyl-[acceptor protein]-L-lysine.. Its pathway is protein modification; protein ubiquitination. Its function is as follows. E3 ubiquitin-protein ligase which accepts ubiquitin from an E2 ubiquitin-conjugating enzyme in the form of a thioester and then directly transfers the ubiquitin to targeted substrates. Essential in early embryonic development to prevent apoptotic death. This is G2/M phase-specific E3 ubiquitin-protein ligase (G2E3) from Homo sapiens (Human).